Here is a 231-residue protein sequence, read N- to C-terminus: Succinate dehydrogenase subunit 5, mitochondrial (231 aa).

A mitochondrion-targeting transit peptide spans 1–63; sequence MAAALRSSCA…AFSWNLRRLF (63 aa).

In terms of assembly, component of complex II composed of eight subunits in plants: four classical SDH subunits SDH1, SDH2, SDH3 and SDH4 (a flavoprotein (FP), an iron-sulfur protein (IP), and a cytochrome b composed of a large and a small subunit.), as well as four subunits unknown in mitochondria from bacteria and heterotrophic eukaryotes.

It is found in the mitochondrion inner membrane. The protein operates within carbohydrate metabolism; tricarboxylic acid cycle. This chain is Succinate dehydrogenase subunit 5, mitochondrial, found in Oryza sativa subsp. japonica (Rice).